Here is a 384-residue protein sequence, read N- to C-terminus: MASVAYICSLPVNTSRDQVSLATVHRLVFMERSERQKIQLTTNQPYDESFEVNAEEAASVHTPSPRQIVSRRTGRQKQSTMSGYAGEKLEEDTKRKKEPPPGPRGANKNDEEEDEDDDDDDDDDDSDDTESDEEEEEPGSAPEGAYDPADYEHLPVTGEIKELFQYITRYTPQTIELDHKLKPFIPDFIPAVGDIDAFLKVPRPDGKPDNLGLLVLDEPCTKQSDPTVLSLWLSENSKQHNVTEVKVKSIENPEKNPKAIDNWIESISELHRSKPPATVHYTRPMPDIDSLMQEWPSEFEELLGKVNLPTADIDCDLAEYVDMICGILDIPVYKNRIHSLHVLFTLYSEFKNSQHFKSATDGQKSDTPPASRSATAEIERLTLD.

Disordered regions lie at residues 52–151 (VNAE…PADY) and 358–384 (SATDGQKSDTPPASRSATAEIERLTLD). Over residues 87-99 (EKLEEDTKRKKEP) the composition is skewed to basic and acidic residues. Over residues 110–138 (DEEEDEDDDDDDDDDDSDDTESDEEEEEP) the composition is skewed to acidic residues. Positions 358 to 374 (SATDGQKSDTPPASRSA) are enriched in polar residues.

Belongs to the IFT46 family.

It localises to the cytoplasm. It is found in the cytoskeleton. Its subcellular location is the cilium basal body. The protein localises to the cell projection. The protein resides in the cilium. In terms of biological role, forms part of a complex involved in intraflagellar transport (IFT), the bi-directional movement of particles required for the assembly, maintenance and functioning of primary cilia. Plays a role in early embryonic development. The protein is Intraflagellar transport protein 46 homolog of Danio rerio (Zebrafish).